Consider the following 311-residue polypeptide: Olfactory receptor 4S2 (311 aa).

The Extracellular portion of the chain corresponds to 1–23 (MEKINNVTEFIFWGLSQSPEIEK). Residue asparagine 6 is glycosylated (N-linked (GlcNAc...) asparagine). Residues 24 to 47 (VCFVVFSFFYIIILLGNLLIMLTV) form a helical membrane-spanning segment. Residues 48-55 (CLSNLFKS) are Cytoplasmic-facing. A helical transmembrane segment spans residues 56-77 (PMYFFLSFLSFVDICYSSVTAP). Topologically, residues 78–98 (KMIVDLLAKDKTISYVGCMLQ) are extracellular. A disulfide bridge connects residues cysteine 95 and cysteine 187. Residues 99–118 (LFGVHFFGCTEIFILTVMAY) traverse the membrane as a helical segment. Residues 119 to 137 (DRYVAICKPLHYMTIMNRE) are Cytoplasmic-facing. Residues 138–156 (TCNKMLLGTWVGGFLHSII) form a helical membrane-spanning segment. At 157-193 (QVALVVQLPFCGPNEIDHYFCDVHPVLKLACTETYIV) the chain is on the extracellular side. A helical transmembrane segment spans residues 194 to 217 (GVVVTANSGTIALGSFVILLISYS). Topologically, residues 218-233 (IILVSLRKQSAEGRRK) are cytoplasmic. The helical transmembrane segment at 234–256 (ALSTCGSHIAMVVIFFGPCTFMY) threads the bilayer. Residues 257–267 (MRPDTTFSEDK) are Extracellular-facing. Residues 268 to 287 (MVAVFYTIITPMLNPLIYTL) traverse the membrane as a helical segment. The Cytoplasmic segment spans residues 288–311 (RNAEVKNAMKKLWGRNVFLEAKGK).

It belongs to the G-protein coupled receptor 1 family.

It localises to the cell membrane. Functionally, odorant receptor. This Homo sapiens (Human) protein is Olfactory receptor 4S2 (OR4S2).